Reading from the N-terminus, the 137-residue chain is Phospholipase A2 group V (137 aa).

The signal sequence occupies residues 1–20 (MKRLLTLAWFLACSVPAVPG). Cystine bridges form between Cys-46-Cys-137, Cys-48-Cys-64, Cys-63-Cys-117, Cys-70-Cys-110, Cys-79-Cys-103, and Cys-97-Cys-108. Ca(2+)-binding residues include Tyr-47, Gly-49, and Gly-51. Residue His-67 is part of the active site. Asp-68 is a Ca(2+) binding site. The active site involves Asp-111.

It belongs to the phospholipase A2 family. Ca(2+) serves as cofactor. In terms of processing, this enzyme lacks one of the seven disulfide bonds found in similar PA2 proteins.

The protein localises to the secreted. It is found in the cell membrane. It localises to the cytoplasmic vesicle. Its subcellular location is the phagosome. The protein resides in the recycling endosome. The protein localises to the golgi apparatus. It is found in the cis-Golgi network. It localises to the trans-Golgi network. It carries out the reaction a 1,2-diacyl-sn-glycero-3-phosphocholine + H2O = a 1-acyl-sn-glycero-3-phosphocholine + a fatty acid + H(+). The catalysed reaction is 1-hexadecanoyl-2-(9Z-octadecenoyl)-sn-glycero-3-phosphocholine + H2O = 1-hexadecanoyl-sn-glycero-3-phosphocholine + (9Z)-octadecenoate + H(+). The enzyme catalyses 1-hexadecanoyl-2-(5Z,8Z,11Z,14Z-eicosatetraenoyl)-sn-glycero-3-phosphocholine + H2O = 1-hexadecanoyl-sn-glycero-3-phosphocholine + (5Z,8Z,11Z,14Z)-eicosatetraenoate + H(+). It catalyses the reaction 1-hexadecanoyl-2-(9Z,12Z-octadecadienoyl)-sn-glycero-3-phosphoethanolamine + H2O = 1-hexadecanoyl-sn-glycero-3-phosphoethanolamine + (9Z,12Z)-octadecadienoate + H(+). It carries out the reaction 1-hexadecanoyl-2-(5Z,8Z,11Z,14Z-eicosatetraenoyl)-sn-glycero-3-phosphoethanolamine + H2O = 1-hexadecanoyl-sn-glycero-3-phosphoethanolamine + (5Z,8Z,11Z,14Z)-eicosatetraenoate + H(+). The catalysed reaction is 1-octadecanoyl-2-(5Z,8Z,11Z,14Z-eicosatetraenoyl)-sn-glycero-3-phospho-(1D-myo-inositol) + H2O = 1-octadecanoyl-sn-glycero-3-phospho-(1D-myo-inositol) + (5Z,8Z,11Z,14Z)-eicosatetraenoate + H(+). The enzyme catalyses 1-hexadecanoyl-2-(9Z-octadecenoyl)-sn-glycero-3-phosphoglycerol + H2O = 1-hexadecanoyl-sn-glycero-3-phosphoglycerol + (9Z)-octadecenoate + H(+). It catalyses the reaction N-hexadecanoyl-1,2-di-(9Z-octadecenoyl)-sn-glycero-3-phosphoethanolamine + H2O = N-hexadecanoyl-1-(9Z-octadecenoyl)-sn-glycero-3-phosphoethanolamine + (9Z)-octadecenoate + H(+). It carries out the reaction 1'-[1,2-di-(9Z-octadecenoyl)-sn-glycero-3-phospho]-3'-[1-(9Z-octadecenoyl)-sn-glycero-3-phospho]-glycerol + H2O = 1',3'-bis-[1-(9Z-octadecenoyl)-sn-glycero-3-phospho]-glycerol + (9Z)-octadecenoate + H(+). The catalysed reaction is 1',3'-bis[1,2-di-(9Z-octadecenoyl)-sn-glycero-3-phospho]-glycerol + H2O = 1'-[1,2-di-(9Z-octadecenoyl)-sn-glycero-3-phospho]-3'-[1-(9Z-octadecenoyl)-sn-glycero-3-phospho]-glycerol + (9Z)-octadecenoate + H(+). Its pathway is lipid metabolism; phospholipid metabolism. The protein operates within lipid metabolism; leukotriene B4 biosynthesis. It functions in the pathway lipid metabolism; leukotriene C4 biosynthesis. Its function is as follows. Secretory calcium-dependent phospholipase A2 that primarily targets extracellular phospholipids. Hydrolyzes the ester bond of the fatty acyl group attached at sn-2 position of phospholipids (phospholipase A2 activity), preferentially releasing fatty acyl groups with a low degree of unsaturation such as oleoyl (C18:1) and linoleoyl (C18:2) groups. Hydrolyzes low-density lipoprotein (LDL) phospholipids releasing unsaturated fatty acids that drive macrophage polarization toward an M2 phenotype. May act in an autocrine and paracrine manner. Contributes to lipid remodeling of cellular membranes at different subcellular locations and generation of lipid mediators involved in pathogen clearance. Cleaves sn-2 fatty acyl chains of cardiolipin, a major component of the inner membrane of mitochondria and bacterial membranes. Promotes phagocytosis of bacteria in macrophages through production of lysophosphatidylethanolamines. Displays bactericidal activity against Gram-positive bacteria by directly hydrolyzing phospholipids of the bacterial membrane. Promotes phagocytosis and killing of ingested fungi likely through controlling phagosome-lysosome fusion and phagosome maturation. Plays a role in biosynthesis of cysteinyl leukotrienes (CysLTs) in myeloid cells. In eosinophils, triggers perinuclear arachidonate release and LTC4 synthesis in a PLA2G4A-independent way. In neutrophils, amplifies CysLTs biosynthesis initiated by PLA2G4A. Promotes immune complex clearance in macrophages via stimulating synthesis of CysLTs, which act through CYSLTR1 to trigger phagocytosis. May regulate antigen processing in antigen-presenting cells. In pulmonary macrophages regulates IL33 production required for activation of group 2 innate lymphoid cells. May play a role in the biosynthesis of N-acyl ethanolamines that regulate energy metabolism. Hydrolyzes N-acyl phosphatidylethanolamines to N-acyl lysophosphatidylethanolamines, which are further cleaved by a lysophospholipase D to release N-acyl ethanolamines. The protein is Phospholipase A2 group V (Pla2g5) of Rattus norvegicus (Rat).